Consider the following 455-residue polypeptide: Chitin deacetylase 2 (455 aa).

A signal peptide spans 1-19 (MIPSTAAALLTLTAGAAFA). Residues Asn-86, Asn-98, Asn-122, and Asn-142 are each glycosylated (N-linked (GlcNAc...) asparagine). Residues 157 to 347 (MTWGLGFDDG…IKSAFNYIVP (191 aa)) form the NodB homology domain. Residue Asp-164 is the Proton acceptor of the active site. Asp-164 provides a ligand contact to acetate. Asp-165 contacts Co(2+). Asn-168 carries N-linked (GlcNAc...) asparagine glycosylation. Co(2+)-binding residues include His-214 and His-218. Acetate is bound at residue Tyr-255. Residues Asn-270 and Asn-308 are each glycosylated (N-linked (GlcNAc...) asparagine). His-321 acts as the Proton donor in catalysis. N-linked (GlcNAc...) asparagine glycans are attached at residues Asn-325, Asn-353, Asn-362, and Asn-377. The tract at residues 381–423 (STTQKDGSSSTNTASGSGAAGSASATSSSDDSSSSGGSSGSSG) is disordered. The N-linked (GlcNAc...) asparagine glycan is linked to Asn-426. A lipid anchor (GPI-anchor amidated serine) is attached at Ser-429. The propeptide at 430–455 (GALGMFDSLSGVGLILGGVVAGVMLL) is removed in mature form.

Belongs to the polysaccharide deacetylase family. It depends on Co(2+) as a cofactor. The GPI anchor is required for the attachment to the cell membrane but not for cell surface targeting.

It is found in the secreted. It localises to the cell wall. Its subcellular location is the cell membrane. It catalyses the reaction [(1-&gt;4)-N-acetyl-beta-D-glucosaminyl](n) + n H2O = chitosan + n acetate. Functionally, hydrolyzes the N-acetamido groups of N-acetyl-D-glucosamine residues in chitin to form chitosan and acetate. Chitosan is required to anchor melanin to the cell wall, for maintenance of cell wall integrity, and for proper cytokinesis. Chitosan offers an advantage during infection as it is less readily detected than chitin by host immunosurveillance mechanisms. The sequence is that of Chitin deacetylase 2 from Cryptococcus neoformans var. grubii serotype A (strain H99 / ATCC 208821 / CBS 10515 / FGSC 9487) (Filobasidiella neoformans var. grubii).